Reading from the N-terminus, the 351-residue chain is Adenine deaminase (351 aa).

Residues histidine 20, histidine 22, and histidine 200 each contribute to the Zn(2+) site. Glutamate 203 functions as the Proton donor in the catalytic mechanism. Aspartate 281 contributes to the Zn(2+) binding site. Residue aspartate 282 participates in substrate binding.

This sequence belongs to the metallo-dependent hydrolases superfamily. Adenosine and AMP deaminases family. Adenine deaminase type 2 subfamily. Zn(2+) serves as cofactor.

It catalyses the reaction adenine + H2O + H(+) = hypoxanthine + NH4(+). In terms of biological role, catalyzes the hydrolytic deamination of adenine to hypoxanthine. Plays an important role in the purine salvage pathway and in nitrogen catabolism. This chain is Adenine deaminase, found in Cupriavidus taiwanensis (strain DSM 17343 / BCRC 17206 / CCUG 44338 / CIP 107171 / LMG 19424 / R1) (Ralstonia taiwanensis (strain LMG 19424)).